Here is a 256-residue protein sequence, read N- to C-terminus: Hydroxyethylthiazole kinase (256 aa).

Met-37 contributes to the substrate binding site. The ATP site is built by Lys-113 and Thr-159. Gly-186 lines the substrate pocket.

It belongs to the Thz kinase family. Requires Mg(2+) as cofactor.

The catalysed reaction is 5-(2-hydroxyethyl)-4-methylthiazole + ATP = 4-methyl-5-(2-phosphooxyethyl)-thiazole + ADP + H(+). The protein operates within cofactor biosynthesis; thiamine diphosphate biosynthesis; 4-methyl-5-(2-phosphoethyl)-thiazole from 5-(2-hydroxyethyl)-4-methylthiazole: step 1/1. In terms of biological role, catalyzes the phosphorylation of the hydroxyl group of 4-methyl-5-beta-hydroxyethylthiazole (THZ). The chain is Hydroxyethylthiazole kinase from Exiguobacterium sibiricum (strain DSM 17290 / CCUG 55495 / CIP 109462 / JCM 13490 / 255-15).